The chain runs to 753 residues: Subtilisin-like protease SBT3.17 (753 aa).

A signal peptide spans 1 to 29 (MGNSFLIADTSSLVIGLLLILNGVFISAA). Residues 30 to 116 (KHYGLNKIHI…VVPSRVMRLK (87 aa)) constitute a propeptide, activation peptide. The Inhibitor I9 domain maps to 38–115 (HIVHLGAKQH…RVVPSRVMRL (78 aa)). An N-linked (GlcNAc...) asparagine glycan is attached at Asn97. Residues 120 to 603 (TFDYLGLLPT…GGLINPEKVT (484 aa)) form the Peptidase S8 domain. Residue Asp150 is the Charge relay system of the active site. N-linked (GlcNAc...) asparagine glycosylation is present at Asn161. His227 serves as the catalytic Charge relay system. The N-linked (GlcNAc...) asparagine glycan is linked to Asn369. The active-site Charge relay system is the Ser534. Residues Asn639, Asn704, and Asn737 are each glycosylated (N-linked (GlcNAc...) asparagine).

It belongs to the peptidase S8 family.

It is found in the secreted. The chain is Subtilisin-like protease SBT3.17 from Arabidopsis thaliana (Mouse-ear cress).